The sequence spans 249 residues: Derlin-2.2 (249 aa).

Residues 1–21 are Cytoplasmic-facing; sequence MAQAVEEWYRQMPIITRSYLT. The helical transmembrane segment at 22–42 threads the bilayer; sequence AAVVTTVGCTLEIISPYHLYL. Topologically, residues 43–96 are lumenal; it reads NPKLVVQHYEIWRLVTNFLYFRKMDLDFLFHMFFLARYCKLLEENSFRGRTADF. The chain crosses the membrane as a helical span at residues 97-117; that stretch reads FYMLLFGATVLTGIVLIGGMI. The Cytoplasmic segment spans residues 118–122; that stretch reads PYISE. Residues 123–143 traverse the membrane as a helical segment; the sequence is TFARILFLSNSLTFMMVYVWS. At 144-152 the chain is on the lumenal side; the sequence is KHNPFIHMS. The chain crosses the membrane as a helical span at residues 153 to 173; it reads FLGLFTFTAAYLPWVLLGFSI. Residues 174 to 249 are Cytoplasmic-facing; the sequence is LVGSSTWVDL…GAIGVDPQAQ (76 aa).

The protein belongs to the derlin family. Expressed in roots, stalks, leaves, immature ears, embryo and endosperm.

It localises to the endoplasmic reticulum membrane. In terms of biological role, may be involved in the degradation process of specific misfolded endoplasmic reticulum (ER) luminal proteins. The sequence is that of Derlin-2.2 (DER2.2) from Zea mays (Maize).